A 394-amino-acid polypeptide reads, in one-letter code: Probable malate--CoA ligase subunit beta (394 aa).

The region spanning 9–244 (KELLARHGVH…KSQEDPRETF (236 aa)) is the ATP-grasp domain. ATP contacts are provided by Lys-46, Glu-99, Val-102, and Glu-107. Asn-199 and Asp-213 together coordinate Mg(2+).

This sequence belongs to the succinate/malate CoA ligase beta subunit family. In terms of assembly, heterotetramer of two alpha and two beta subunits. Requires Mg(2+) as cofactor.

It catalyses the reaction (S)-malate + ATP + CoA = (S)-malyl-CoA + ADP + phosphate. It participates in one-carbon metabolism; formaldehyde assimilation via serine pathway. In Mesorhizobium japonicum (strain LMG 29417 / CECT 9101 / MAFF 303099) (Mesorhizobium loti (strain MAFF 303099)), this protein is Probable malate--CoA ligase subunit beta (mtkA).